Consider the following 224-residue polypeptide: Extracellular protease inhibitor 10 (224 aa).

A signal peptide spans 1 to 22 (MKSAFTLSLALVAVTATISAAA). Kazal-like domains lie at 23–72 (DDNC…ECAS), 90–127 (TSGTVGCPDMCLDVYDPVSDENGKEYSNQCYMEMAKCK), and 156–210 (GYQG…PCPS). Asn-25 carries N-linked (GlcNAc...) asparagine glycosylation. Disulfide bonds link Cys-26–Cys-56, Cys-30–Cys-49, and Cys-38–Cys-70. Positions 69-92 (ECASTPASSATPSPVTSSTGSTSG) are disordered. The span at 71 to 92 (ASTPASSATPSPVTSSTGSTSG) shows a compositional bias: low complexity. 5 cysteine pairs are disulfide-bonded: Cys-96-Cys-126, Cys-100-Cys-119, Cys-162-Cys-193, Cys-167-Cys-186, and Cys-175-Cys-208. A glycan (N-linked (GlcNAc...) asparagine) is linked at Asn-199. Residues 202 to 224 (MVGEGPCPSQEQQQQQQQQQQKL) are disordered. Residues 211 to 224 (QEQQQQQQQQQQKL) are compositionally biased toward low complexity.

In terms of assembly, interacts with host subtilisin-like protease P69B.

It is found in the secreted. In terms of biological role, secreted effector that interacts with and inhibits the pathogenesis-related P69B subtilisin-like serine protease of host tomato. Inhibition of host proteases by a pathogen extracellular protease inhibitor forms a specific type of defense-counterdefense mechanism between plants and microbial pathogens. The protein is Extracellular protease inhibitor 10 of Phytophthora infestans (Potato late blight agent).